We begin with the raw amino-acid sequence, 422 residues long: UDP-N-acetylglucosamine 1-carboxyvinyltransferase (422 aa).

22–23 serves as a coordination point for phosphoenolpyruvate; sequence KN. Arg-94 provides a ligand contact to UDP-N-acetyl-alpha-D-glucosamine. Catalysis depends on Cys-118, which acts as the Proton donor. At Cys-118 the chain carries 2-(S-cysteinyl)pyruvic acid O-phosphothioketal. UDP-N-acetyl-alpha-D-glucosamine-binding positions include 123-127, Asp-309, and Ile-331; that span reads RPVDL.

Belongs to the EPSP synthase family. MurA subfamily.

It localises to the cytoplasm. The catalysed reaction is phosphoenolpyruvate + UDP-N-acetyl-alpha-D-glucosamine = UDP-N-acetyl-3-O-(1-carboxyvinyl)-alpha-D-glucosamine + phosphate. It participates in cell wall biogenesis; peptidoglycan biosynthesis. In terms of biological role, cell wall formation. Adds enolpyruvyl to UDP-N-acetylglucosamine. The sequence is that of UDP-N-acetylglucosamine 1-carboxyvinyltransferase from Cereibacter sphaeroides (strain ATCC 17023 / DSM 158 / JCM 6121 / CCUG 31486 / LMG 2827 / NBRC 12203 / NCIMB 8253 / ATH 2.4.1.) (Rhodobacter sphaeroides).